The primary structure comprises 60 residues: LKCNKLIPLAYKTCPAGKNLCYKMFMVSNKTVPVKRGCIDVCPKNSLLVKYVCCNTDRCN.

4 disulfides stabilise this stretch: Cys3-Cys21, Cys14-Cys38, Cys42-Cys53, and Cys54-Cys59.

Belongs to the three-finger toxin family. Short-chain subfamily. Type IA cytotoxin sub-subfamily. Monomer, or heterodimer with alpha-cobratoxin (AC P01391); disulfide-linked. Expressed by the venom gland.

The protein resides in the secreted. Its subcellular location is the target cell membrane. In terms of biological role, monomer: shows cytolytic activity. Functionally, heterodimer: has no cytolytic activity, but retains most of the alpha-cobratoxin capacity to compete with alpha-bungarotoxin for binding to Torpedo and alpha-7/CHRNA7 nicotinic acetylcholine receptors (nAChRs) as well as to Lymnea stagnalis acetylcholine-binding protein. The polypeptide is Cytotoxin 2 (Naja kaouthia (Monocled cobra)).